Consider the following 598-residue polypeptide: UvrABC system protein C (598 aa).

A GIY-YIG domain is found at 14-91; it reads DSPGCYLHKD…IQKNMPKYNI (78 aa). The UVR domain occupies 196-231; sequence DKIIEDLRSKMLAASEEMAFERAAEYRDLISGIATM.

The protein belongs to the UvrC family. In terms of assembly, interacts with UvrB in an incision complex.

It localises to the cytoplasm. Its function is as follows. The UvrABC repair system catalyzes the recognition and processing of DNA lesions. UvrC both incises the 5' and 3' sides of the lesion. The N-terminal half is responsible for the 3' incision and the C-terminal half is responsible for the 5' incision. This chain is UvrABC system protein C, found in Streptococcus pyogenes serotype M18 (strain MGAS8232).